The chain runs to 188 residues: MSETPSKQTAASDETGAVVAPEPGPVSQWLNKQGFDHNILEPDHLGVEQIGVDAAVLPMIAAALKSNGFDYLQCQGGYDEGPGEQLVCFYHLLAMAEQVEAMVADPSAKLREVRIKVFLNREGTPSLPSIYGLFRGADWQERETFDMYGIQFEGHPHPKRLLMPEDWKGWPLRKDYVQPDFYEMQDAY.

Positions 1 to 12 (MSETPSKQTAAS) are enriched in polar residues. The tract at residues 1-23 (MSETPSKQTAASDETGAVVAPEP) is disordered.

The protein belongs to the complex I 30 kDa subunit family. As to quaternary structure, NDH-1 can be composed of about 15 different subunits; different subcomplexes with different compositions have been identified which probably have different functions.

The protein localises to the cellular thylakoid membrane. The catalysed reaction is a plastoquinone + NADH + (n+1) H(+)(in) = a plastoquinol + NAD(+) + n H(+)(out). It carries out the reaction a plastoquinone + NADPH + (n+1) H(+)(in) = a plastoquinol + NADP(+) + n H(+)(out). Functionally, NDH-1 shuttles electrons from an unknown electron donor, via FMN and iron-sulfur (Fe-S) centers, to quinones in the respiratory and/or the photosynthetic chain. The immediate electron acceptor for the enzyme in this species is believed to be plastoquinone. Couples the redox reaction to proton translocation, and thus conserves the redox energy in a proton gradient. Cyanobacterial NDH-1 also plays a role in inorganic carbon-concentration. The chain is NAD(P)H-quinone oxidoreductase subunit J from Synechococcus sp. (strain CC9605).